Here is a 734-residue protein sequence, read N- to C-terminus: 5-methyltetrahydropteroyltriglutamate--homocysteine methyltransferase (734 aa).

Residues 15–18 (REFK) and Lys104 each bind 5-methyltetrahydropteroyltri-L-glutamate. L-homocysteine is bound by residues 409-411 (IGS) and Glu462. L-methionine contacts are provided by residues 409-411 (IGS) and Glu462. 5-methyltetrahydropteroyltri-L-glutamate is bound by residues 493-494 (RC) and Trp539. Asp577 is an L-homocysteine binding site. Asp577 serves as a coordination point for L-methionine. Glu583 serves as a coordination point for 5-methyltetrahydropteroyltri-L-glutamate. Residues His618, Cys620, and Glu642 each contribute to the Zn(2+) site. His672 serves as the catalytic Proton donor. Zn(2+) is bound at residue Cys704.

It belongs to the vitamin-B12 independent methionine synthase family. It depends on Zn(2+) as a cofactor.

It catalyses the reaction 5-methyltetrahydropteroyltri-L-glutamate + L-homocysteine = tetrahydropteroyltri-L-glutamate + L-methionine. The protein operates within amino-acid biosynthesis; L-methionine biosynthesis via de novo pathway; L-methionine from L-homocysteine (MetE route): step 1/1. Catalyzes the transfer of a methyl group from 5-methyltetrahydrofolate to homocysteine resulting in methionine formation. The sequence is that of 5-methyltetrahydropteroyltriglutamate--homocysteine methyltransferase from Thermotoga maritima (strain ATCC 43589 / DSM 3109 / JCM 10099 / NBRC 100826 / MSB8).